The following is a 321-amino-acid chain: tRNA-dihydrouridine synthase B (321 aa).

Residues Pro16–Ala18 and Gln70 contribute to the FMN site. Cys100 serves as the catalytic Proton donor. FMN-binding positions include Lys139, Asn200–Asp202, and Gly224–Arg225.

It belongs to the Dus family. DusB subfamily. FMN is required as a cofactor.

The enzyme catalyses a 5,6-dihydrouridine in tRNA + NAD(+) = a uridine in tRNA + NADH + H(+). The catalysed reaction is a 5,6-dihydrouridine in tRNA + NADP(+) = a uridine in tRNA + NADPH + H(+). Functionally, catalyzes the synthesis of 5,6-dihydrouridine (D), a modified base found in the D-loop of most tRNAs, via the reduction of the C5-C6 double bond in target uridines. This Yersinia pestis protein is tRNA-dihydrouridine synthase B.